A 67-amino-acid chain; its full sequence is UPF0337 protein BCE_3655 (67 aa).

It belongs to the UPF0337 (CsbD) family.

This chain is UPF0337 protein BCE_3655, found in Bacillus cereus (strain ATCC 10987 / NRS 248).